The sequence spans 887 residues: ABC transporter A family member 10 (887 aa).

7 helical membrane-spanning segments follow: residues 38–58 (GIQYIIVLVILHYTIPNVITL), 198–218 (YLYVIYLPLLFLFSLQQLLVT), 245–265 (IIIVQTITNVINILLVMVVLY), 277–297 (VMLFLQFLLYSFSMVAIGIIL), 309–329 (AISSFLLLILVGVSCFYQFYL), 335–355 (SSWLRSILFLFSPCAFGEFLY), and 376–396 (ISFLFLIIDIFLYFTIAWYIT). A compositionally biased stretch (low complexity) spans 443 to 469 (NNCNNNNTSPSSSSSSQSSPLNKPLLS). The segment at 443 to 474 (NNCNNNNTSPSSSSSSQSSPLNKPLLSGDSDD) is disordered. An ABC transporter domain is found at 481-728 (IRLVNLKKTY…FNLGYILTIV (248 aa)). Residue 519–526 (GQNGSGKT) participates in ATP binding. The span at 774 to 797 (NNNNNENNSNNSDGSSSSSDSSSS) shows a compositional bias: low complexity. A disordered region spans residues 774 to 799 (NNNNNENNSNNSDGSSSSSDSSSSKD).

This sequence belongs to the ABC transporter superfamily. ABCA family.

The protein resides in the membrane. The protein is ABC transporter A family member 10 (abcA10) of Dictyostelium discoideum (Social amoeba).